A 396-amino-acid chain; its full sequence is DNA polymerase interacting tetratricopeptide repeat-containing, protein of 47 kDa (396 aa).

3 TPR repeats span residues 91–124, 129–162, and 163–196; these read ALNY…KTDN, AVLY…KPDY, and TKAR…DVDN.

The protein belongs to the TTC4 family. Forms a complex with Hsp83 and Hsp70aa. Interacts with DNApol-alpha180; the interaction inhibits the activity of the DNA polymerase and occurs only in proliferating cells but not in quiescent cells. In terms of tissue distribution, more abundant in young embryos, pupae and females and a lower level expression seen in late embryos, larvae and males.

It is found in the nucleus. The protein resides in the nucleoplasm. It localises to the cytoplasm. Its function is as follows. May act as a co-chaperone for HSP83. The polypeptide is DNA polymerase interacting tetratricopeptide repeat-containing, protein of 47 kDa (Dpit47) (Drosophila melanogaster (Fruit fly)).